Here is a 119-residue protein sequence, read N- to C-terminus: Large ribosomal subunit protein uL22 (119 aa).

The protein belongs to the universal ribosomal protein uL22 family. Part of the 50S ribosomal subunit.

This protein binds specifically to 23S rRNA; its binding is stimulated by other ribosomal proteins, e.g. L4, L17, and L20. It is important during the early stages of 50S assembly. It makes multiple contacts with different domains of the 23S rRNA in the assembled 50S subunit and ribosome. Its function is as follows. The globular domain of the protein is located near the polypeptide exit tunnel on the outside of the subunit, while an extended beta-hairpin is found that lines the wall of the exit tunnel in the center of the 70S ribosome. This Tropheryma whipplei (strain TW08/27) (Whipple's bacillus) protein is Large ribosomal subunit protein uL22.